We begin with the raw amino-acid sequence, 415 residues long: Serine hydroxymethyltransferase (415 aa).

Residues L117 and 121–123 each bind (6S)-5,6,7,8-tetrahydrofolate; that span reads GHL. N6-(pyridoxal phosphate)lysine is present on K226.

It belongs to the SHMT family. In terms of assembly, homodimer. Requires pyridoxal 5'-phosphate as cofactor.

The protein localises to the cytoplasm. It catalyses the reaction (6R)-5,10-methylene-5,6,7,8-tetrahydrofolate + glycine + H2O = (6S)-5,6,7,8-tetrahydrofolate + L-serine. The protein operates within one-carbon metabolism; tetrahydrofolate interconversion. Its pathway is amino-acid biosynthesis; glycine biosynthesis; glycine from L-serine: step 1/1. Functionally, catalyzes the reversible interconversion of serine and glycine with tetrahydrofolate (THF) serving as the one-carbon carrier. This reaction serves as the major source of one-carbon groups required for the biosynthesis of purines, thymidylate, methionine, and other important biomolecules. Also exhibits THF-independent aldolase activity toward beta-hydroxyamino acids, producing glycine and aldehydes, via a retro-aldol mechanism. This chain is Serine hydroxymethyltransferase, found in Dehalococcoides mccartyi (strain ATCC BAA-2266 / KCTC 15142 / 195) (Dehalococcoides ethenogenes (strain 195)).